Here is a 363-residue protein sequence, read N- to C-terminus: Histidinol-phosphate aminotransferase (363 aa).

N6-(pyridoxal phosphate)lysine is present on Lys-218.

The protein belongs to the class-II pyridoxal-phosphate-dependent aminotransferase family. Histidinol-phosphate aminotransferase subfamily. In terms of assembly, homodimer. Requires pyridoxal 5'-phosphate as cofactor.

It carries out the reaction L-histidinol phosphate + 2-oxoglutarate = 3-(imidazol-4-yl)-2-oxopropyl phosphate + L-glutamate. It participates in amino-acid biosynthesis; L-histidine biosynthesis; L-histidine from 5-phospho-alpha-D-ribose 1-diphosphate: step 7/9. The sequence is that of Histidinol-phosphate aminotransferase from Xanthomonas oryzae pv. oryzae (strain MAFF 311018).